Here is a 589-residue protein sequence, read N- to C-terminus: Capsid scaffolding protein (589 aa).

Active-site charge relay system residues include H47, S118, and H142. A compositionally biased stretch (basic and acidic residues) spans 264 to 273 (EKERPKEPEQ). The tract at residues 264 to 283 (EKERPKEPEQSHVPTESMSH) is disordered. The interaction with pAP stretch occupies residues 307 to 326 (HDGVYLPKDAFFSLIGASRP). Disordered stretches follow at residues 421 to 478 (RSRS…GDRY) and 514 to 552 (ASPTTTTSHQAEASEPQASTAAAAPSTASSHGSKSAERG). Short sequence motifs (nuclear localization signal) lie at residues 428 to 433 (KRRRER) and 453 to 459 (KARKRLK). Residues 453 to 462 (KARKRLKAHH) show a composition bias toward basic residues. Residues 514 to 543 (ASPTTTTSHQAEASEPQASTAAAAPSTASS) show a composition bias toward low complexity. Positions 569-589 (PPKDMVDLNRRLFVAALNKME) are interaction with major capsid protein.

Belongs to the herpesviridae capsid scaffolding protein family. In terms of assembly, homomultimer. Interacts with major capsid protein. As to quaternary structure, exists in a monomer-dimer equilibrium with the dimer being the active species. Post-translationally, capsid scaffolding protein is cleaved by assemblin after formation of the spherical procapsid. As a result, the capsid obtains its mature, icosahedral shape. Cleavages occur at two or more sites: release (R-site) and maturation (M-site).

Its subcellular location is the host cytoplasm. It localises to the host nucleus. The enzyme catalyses Cleaves -Ala-|-Ser- and -Ala-|-Ala- bonds in the scaffold protein.. Its function is as follows. Acts as a scaffold protein by binding major capsid protein in the cytoplasm, inducing the nuclear localization of both proteins. Multimerizes in the nucleus such as major capsid protein forms the icosahedral T=16 capsid. Autocatalytic cleavage releases the assembly protein, and subsequently abolishes interaction with major capsid protein. Cleavages products are evicted from the capsid before or during DNA packaging. In terms of biological role, protease that plays an essential role in virion assembly within the nucleus. Catalyzes the cleavage of the assembly protein after formation of the spherical procapsid. By that cleavage, the capsid matures and gains its icosahedral shape. The cleavage sites seem to include -Ala-Ser-, -Ala-Ala-, as well as Ala-Thr bonds. Assemblin and cleavages products are evicted from the capsid before or during DNA packaging. Plays a major role in capsid assembly. Acts as a scaffold protein by binding major capsid protein. Multimerizes in the nucleus such as major capsid protein forms the icosahedral T=16 capsid. Cleaved by assemblin after capsid completion. The cleavages products are evicted from the capsid before or during DNA packaging. The protein is Capsid scaffolding protein (UL80) of Simian cytomegalovirus (strain Colburn).